The following is a 367-amino-acid chain: Phospho-N-acetylmuramoyl-pentapeptide-transferase (367 aa).

Helical transmembrane passes span 27–47 (VLAA…VIRW), 73–93 (TMGG…WGDL), 97–117 (YVWT…YDDW), 132–152 (WKFF…AFSA), 167–187 (TMAY…VIVG), 200–220 (GLAI…AYVT), 237–257 (AGEL…FLWF), 264–284 (VFMG…VAVI), 289–309 (IVLL…MLQV), and 344–364 (QVVV…LSTL).

Belongs to the glycosyltransferase 4 family. MraY subfamily. The cofactor is Mg(2+).

The protein localises to the cell inner membrane. It carries out the reaction UDP-N-acetyl-alpha-D-muramoyl-L-alanyl-gamma-D-glutamyl-meso-2,6-diaminopimeloyl-D-alanyl-D-alanine + di-trans,octa-cis-undecaprenyl phosphate = di-trans,octa-cis-undecaprenyl diphospho-N-acetyl-alpha-D-muramoyl-L-alanyl-D-glutamyl-meso-2,6-diaminopimeloyl-D-alanyl-D-alanine + UMP. Its pathway is cell wall biogenesis; peptidoglycan biosynthesis. Its function is as follows. Catalyzes the initial step of the lipid cycle reactions in the biosynthesis of the cell wall peptidoglycan: transfers peptidoglycan precursor phospho-MurNAc-pentapeptide from UDP-MurNAc-pentapeptide onto the lipid carrier undecaprenyl phosphate, yielding undecaprenyl-pyrophosphoryl-MurNAc-pentapeptide, known as lipid I. This chain is Phospho-N-acetylmuramoyl-pentapeptide-transferase, found in Dechloromonas aromatica (strain RCB).